The chain runs to 346 residues: Rhomboid protein 1, mitochondrial (346 aa).

The transit peptide at 1–73 (MSGVSSVMLG…RFFSQTSILK (73 aa)) directs the protein to the mitochondrion. 6 helical membrane-spanning segments follow: residues 109–129 (SMTILGLSLMAGIYFGSPYLF), 145–165 (LVYALLGINVAVFGLWQLPKC), 203–223 (MLALWSFGTSLATMLGASNFF), 246–266 (LAIVGPSLGASGALFGVLGCF), 275–295 (ILLFVFPVPGGAWVAFLASVA), and 308–328 (FDYAAHLGGSMMGVLYGWYIS). Residue Ser256 is the Nucleophile of the active site. His313 is an active-site residue.

This sequence belongs to the peptidase S54 family.

It localises to the mitochondrion inner membrane. It catalyses the reaction Cleaves type-1 transmembrane domains using a catalytic dyad composed of serine and histidine that are contributed by different transmembrane domains.. In terms of biological role, mitochondrial rhomboid serine protease processing the mitochondrial membrane fusion regulator MGM1, and the cytochrome c peroxidase (CCP1). Required for TIM11 stability, ATP synthase complex assembly, mitochondrial morphology, cytochrome c (CYC1) storage and mitochondrial genome maintenance. This chain is Rhomboid protein 1, mitochondrial (PCP1), found in Saccharomyces cerevisiae (strain ATCC 204508 / S288c) (Baker's yeast).